The following is a 165-amino-acid chain: MVPSRSGQRPDGPRLIYVTRFASHRHGVWQLRGLRGFGHRGPGLGARCASKQAAVEPGARGGERPTGSQAGVTDTPDSAPFQRRSRAPRAREQAAQAGLNQKNAAKEFDFPIPLNEASKLMKERKKASVWSKVQQVISRMIAENESYRRRLQCQRVSSEIRVAAR.

Residues 51–102 (KQAAVEPGARGGERPTGSQAGVTDTPDSAPFQRRSRAPRAREQAAQAGLNQK) form a disordered region. The span at 66-76 (TGSQAGVTDTP) shows a compositional bias: polar residues.

This is an uncharacterized protein from Mus musculus (Mouse).